The following is a 247-amino-acid chain: uncharacterized protein (247 aa).

This sequence to M.pneumoniae MPN_635 N-terminal region.

This is an uncharacterized protein from Mycoplasma pneumoniae (strain ATCC 29342 / M129 / Subtype 1) (Mycoplasmoides pneumoniae).